Here is a 75-residue protein sequence, read N- to C-terminus: uncharacterized protein (75 aa).

This is an uncharacterized protein from Bovine papillomavirus type 3.